A 249-amino-acid polypeptide reads, in one-letter code: Large ribosomal subunit protein uL10m (249 aa).

The N-terminal 31 residues, 1–31 (MLQLRFMPGWVPRNGFFGLKETIGTVHKRFY), are a transit peptide targeting the mitochondrion. The interval 226 to 249 (SHNDNQKPKEDVESTTDAESKGSK) is disordered.

The protein belongs to the universal ribosomal protein uL10 family. Component of the mitochondrial large ribosomal subunit (mt-LSU). Mature yeast 74S mitochondrial ribosomes consist of a small (37S) and a large (54S) subunit. The 37S small subunit contains a 15S ribosomal RNA (15S mt-rRNA) and 34 different proteins. The 54S large subunit contains a 21S rRNA (21S mt-rRNA) and 46 different proteins.

The protein localises to the mitochondrion. In terms of biological role, component of the mitochondrial ribosome (mitoribosome), a dedicated translation machinery responsible for the synthesis of mitochondrial genome-encoded proteins, including at least some of the essential transmembrane subunits of the mitochondrial respiratory chain. The mitoribosomes are attached to the mitochondrial inner membrane and translation products are cotranslationally integrated into the membrane. The chain is Large ribosomal subunit protein uL10m (MRPL11) from Saccharomyces cerevisiae (strain ATCC 204508 / S288c) (Baker's yeast).